The primary structure comprises 335 residues: UDP-N-acetylenolpyruvoylglucosamine reductase 1 (335 aa).

Positions 36–202 (RIGGPAAVFA…LEVELLLKPG (167 aa)) constitute an FAD-binding PCMH-type domain. R181 is an active-site residue. S231 functions as the Proton donor in the catalytic mechanism. Residue E306 is part of the active site.

The protein belongs to the MurB family. The cofactor is FAD.

It localises to the cytoplasm. The enzyme catalyses UDP-N-acetyl-alpha-D-muramate + NADP(+) = UDP-N-acetyl-3-O-(1-carboxyvinyl)-alpha-D-glucosamine + NADPH + H(+). It participates in cell wall biogenesis; peptidoglycan biosynthesis. Its function is as follows. Cell wall formation. This Corynebacterium glutamicum (strain ATCC 13032 / DSM 20300 / JCM 1318 / BCRC 11384 / CCUG 27702 / LMG 3730 / NBRC 12168 / NCIMB 10025 / NRRL B-2784 / 534) protein is UDP-N-acetylenolpyruvoylglucosamine reductase 1 (murB1).